The sequence spans 356 residues: WAT1-related protein At1g68170 (356 aa).

10 helical membrane passes run 4-24 (ITAM…FKLA), 33-53 (VLVA…CFIF), 65-85 (LMLL…ILTI), 94-114 (TFTS…AALL), 125-145 (VGLA…VFIF), 176-196 (ISIL…LWFL), 210-230 (WNAT…ALCW), 245-265 (LLTI…VNAW), 273-293 (LFVS…GSFL), and 298-318 (LHLG…IVLW). 2 EamA domains span residues 14 to 142 (TAGL…GALV) and 191 to 317 (ISLW…YIVL).

It belongs to the drug/metabolite transporter (DMT) superfamily. Plant drug/metabolite exporter (P-DME) (TC 2.A.7.4) family.

It localises to the membrane. In Arabidopsis thaliana (Mouse-ear cress), this protein is WAT1-related protein At1g68170.